A 275-amino-acid chain; its full sequence is NADPH-dependent 7-cyano-7-deazaguanine reductase (275 aa).

V81–S83 is a binding site for substrate. S83–K84 is a binding site for NADPH. The active-site Thioimide intermediate is C182. D189 functions as the Proton donor in the catalytic mechanism. Substrate is bound at residue H221 to E222. Position 250 to 251 (R250 to G251) interacts with NADPH.

The protein belongs to the GTP cyclohydrolase I family. QueF type 2 subfamily. As to quaternary structure, homodimer.

It localises to the cytoplasm. The catalysed reaction is 7-aminomethyl-7-carbaguanine + 2 NADP(+) = 7-cyano-7-deazaguanine + 2 NADPH + 3 H(+). The protein operates within tRNA modification; tRNA-queuosine biosynthesis. In terms of biological role, catalyzes the NADPH-dependent reduction of 7-cyano-7-deazaguanine (preQ0) to 7-aminomethyl-7-deazaguanine (preQ1). This is NADPH-dependent 7-cyano-7-deazaguanine reductase from Polaromonas sp. (strain JS666 / ATCC BAA-500).